A 155-amino-acid chain; its full sequence is Ribosome-binding factor A (155 aa).

Basic and acidic residues-rich tracts occupy residues 116-125 (ARQRDQEVAR) and 142-155 (SPHE…ADGW). Positions 116–155 (ARQRDQEVARQAEGATPAGDANPYKTSPHEGRPESEADGW) are disordered.

Belongs to the RbfA family. As to quaternary structure, monomer. Binds 30S ribosomal subunits, but not 50S ribosomal subunits or 70S ribosomes.

The protein resides in the cytoplasm. In terms of biological role, one of several proteins that assist in the late maturation steps of the functional core of the 30S ribosomal subunit. Associates with free 30S ribosomal subunits (but not with 30S subunits that are part of 70S ribosomes or polysomes). Required for efficient processing of 16S rRNA. May interact with the 5'-terminal helix region of 16S rRNA. In Corynebacterium kroppenstedtii (strain DSM 44385 / JCM 11950 / CIP 105744 / CCUG 35717), this protein is Ribosome-binding factor A.